Here is a 314-residue protein sequence, read N- to C-terminus: 2,3-dihydroxyphenylpropionate/2,3-dihydroxicinnamic acid 1,2-dioxygenase (314 aa).

The Proton donor role is filled by H115. H179 serves as the catalytic Proton acceptor.

The protein belongs to the LigB/MhpB extradiol dioxygenase family. As to quaternary structure, homotetramer. Requires Fe(2+) as cofactor.

The enzyme catalyses 3-(2,3-dihydroxyphenyl)propanoate + O2 = (2Z,4E)-2-hydroxy-6-oxonona-2,4-dienedioate + H(+). The catalysed reaction is (2E)-3-(2,3-dihydroxyphenyl)prop-2-enoate + O2 = (2Z,4E,7E)-2-hydroxy-6-oxonona-2,4,7-trienedioate + H(+). It participates in aromatic compound metabolism; 3-phenylpropanoate degradation. In terms of biological role, catalyzes the non-heme iron(II)-dependent oxidative cleavage of 2,3-dihydroxyphenylpropionic acid and 2,3-dihydroxicinnamic acid into 2-hydroxy-6-ketononadienedioate and 2-hydroxy-6-ketononatrienedioate, respectively. In Rhodococcus jostii (strain RHA1), this protein is 2,3-dihydroxyphenylpropionate/2,3-dihydroxicinnamic acid 1,2-dioxygenase.